The following is a 263-amino-acid chain: Hydroxyethylthiazole kinase 1 (263 aa).

Substrate is bound at residue Met-42. ATP is bound by residues Lys-118 and Thr-164. Gly-191 is a substrate binding site.

This sequence belongs to the Thz kinase family. Mg(2+) is required as a cofactor.

It carries out the reaction 5-(2-hydroxyethyl)-4-methylthiazole + ATP = 4-methyl-5-(2-phosphooxyethyl)-thiazole + ADP + H(+). It participates in cofactor biosynthesis; thiamine diphosphate biosynthesis; 4-methyl-5-(2-phosphoethyl)-thiazole from 5-(2-hydroxyethyl)-4-methylthiazole: step 1/1. Functionally, catalyzes the phosphorylation of the hydroxyl group of 4-methyl-5-beta-hydroxyethylthiazole (THZ). In Clostridium botulinum (strain ATCC 19397 / Type A), this protein is Hydroxyethylthiazole kinase 1.